The following is a 349-amino-acid chain: Dihydroorotate dehydrogenase (quinone) (349 aa).

FMN is bound by residues 65-69 (AGFDK) and A89. K69 is a binding site for substrate. Position 114-118 (114-118 (NRMGF)) interacts with substrate. FMN-binding residues include N143 and N176. N176 contributes to the substrate binding site. Residue S179 is the Nucleophile of the active site. N181 contacts substrate. 2 residues coordinate FMN: K212 and T240. 241–242 (NT) provides a ligand contact to substrate. Positions 244 to 265 (TERPESLSHPHAGEQGGLSGAP) are disordered. A compositionally biased stretch (basic and acidic residues) spans 245-255 (ERPESLSHPHA). Residues G263, G290, and 311–312 (YT) each bind FMN.

This sequence belongs to the dihydroorotate dehydrogenase family. Type 2 subfamily. As to quaternary structure, monomer. The cofactor is FMN.

It is found in the cell membrane. The enzyme catalyses (S)-dihydroorotate + a quinone = orotate + a quinol. The protein operates within pyrimidine metabolism; UMP biosynthesis via de novo pathway; orotate from (S)-dihydroorotate (quinone route): step 1/1. Catalyzes the conversion of dihydroorotate to orotate with quinone as electron acceptor. The protein is Dihydroorotate dehydrogenase (quinone) of Halobacterium salinarum (strain ATCC 29341 / DSM 671 / R1).